Reading from the N-terminus, the 500-residue chain is Glycerol kinase (500 aa).

An ADP-binding site is contributed by threonine 11. 3 residues coordinate ATP: threonine 11, threonine 12, and serine 13. Threonine 11 serves as a coordination point for sn-glycerol 3-phosphate. Residue arginine 15 participates in ADP binding. 4 residues coordinate sn-glycerol 3-phosphate: arginine 81, glutamate 82, tyrosine 133, and aspartate 242. 5 residues coordinate glycerol: arginine 81, glutamate 82, tyrosine 133, aspartate 242, and glutamine 243. Residues threonine 264 and glycine 307 each coordinate ADP. Threonine 264, glycine 307, glutamine 311, and glycine 411 together coordinate ATP. ADP is bound at residue glycine 411.

This sequence belongs to the FGGY kinase family.

The catalysed reaction is glycerol + ATP = sn-glycerol 3-phosphate + ADP + H(+). It participates in polyol metabolism; glycerol degradation via glycerol kinase pathway; sn-glycerol 3-phosphate from glycerol: step 1/1. Inhibited by fructose 1,6-bisphosphate (FBP). Functionally, key enzyme in the regulation of glycerol uptake and metabolism. Catalyzes the phosphorylation of glycerol to yield sn-glycerol 3-phosphate. The sequence is that of Glycerol kinase from Bradyrhizobium diazoefficiens (strain JCM 10833 / BCRC 13528 / IAM 13628 / NBRC 14792 / USDA 110).